Reading from the N-terminus, the 406-residue chain is MFPFSYPADDRWLLPEGIEELLPEEAERLELLRRRVLDRFAAWGYRLVMPPLIEFIDSLLTGAGHDLDIQTFKLIDQASGRLLGIRADMTPQVARIDARTHAGDTPGRFCYLGSVLHTQADRLEKSRSPIQFGAELYGHSGRASDLEIIRLMLEVLTTAGVERIHLDLGHVGIFRGLARQAGLTGEQEGELFSLLQQKARPELTAAVASLDIDPPLARMFTELVDLNGRHGVMERARECLSEANAAVHMALEELAVLAERLGDCCPEVPVNFDLAELRGYRYQTGVVFAAFVPGYGREIARGGRYDDIGKVFGRARPATGFSADLKVVLRLSGLGESFVGSGEAIFAPAVSDPALIAAIRELRDAGRIVIEALPGQQGDAAAHGFRSELRRNGERWCVCPVASKDT.

Belongs to the class-II aminoacyl-tRNA synthetase family. HisZ subfamily. In terms of assembly, heteromultimer composed of HisG and HisZ subunits.

The protein resides in the cytoplasm. It participates in amino-acid biosynthesis; L-histidine biosynthesis; L-histidine from 5-phospho-alpha-D-ribose 1-diphosphate: step 1/9. In terms of biological role, required for the first step of histidine biosynthesis. May allow the feedback regulation of ATP phosphoribosyltransferase activity by histidine. The protein is ATP phosphoribosyltransferase regulatory subunit of Methylococcus capsulatus (strain ATCC 33009 / NCIMB 11132 / Bath).